Here is a 132-residue protein sequence, read N- to C-terminus: Small ribosomal subunit protein eS12 (132 aa).

A2 carries the post-translational modification N-acetylalanine. Residue K129 is modified to N6-succinyllysine.

Belongs to the eukaryotic ribosomal protein eS12 family. In terms of assembly, part of the small subunit (SSU) processome, composed of more than 70 proteins and the RNA chaperone small nucleolar RNA (snoRNA) U3. Subunit of the 40S ribosomal complex.

The protein resides in the nucleus. It is found in the nucleolus. Part of the small subunit (SSU) processome, first precursor of the small eukaryotic ribosomal subunit. During the assembly of the SSU processome in the nucleolus, many ribosome biogenesis factors, an RNA chaperone and ribosomal proteins associate with the nascent pre-rRNA and work in concert to generate RNA folding, modifications, rearrangements and cleavage as well as targeted degradation of pre-ribosomal RNA by the RNA exosome. Subunit of the 40S ribosomal complex. This chain is Small ribosomal subunit protein eS12 (Rps12), found in Rattus norvegicus (Rat).